We begin with the raw amino-acid sequence, 449 residues long: Tubulin beta-7 chain (449 aa).

Residues Gln11, Glu69, Ser138, Gly142, Thr143, Gly144, Asn204, and Asn226 each contribute to the GTP site. Glu69 is a Mg(2+) binding site. Residues 422–449 (YQQYQDATADEEGEYEEEEAEYEQEETY) form a disordered region. Residues 429–449 (TADEEGEYEEEEAEYEQEETY) show a composition bias toward acidic residues.

Belongs to the tubulin family. Dimer of alpha and beta chains. A typical microtubule is a hollow water-filled tube with an outer diameter of 25 nm and an inner diameter of 15 nM. Alpha-beta heterodimers associate head-to-tail to form protofilaments running lengthwise along the microtubule wall with the beta-tubulin subunit facing the microtubule plus end conferring a structural polarity. Microtubules usually have 13 protofilaments but different protofilament numbers can be found in some organisms and specialized cells. It depends on Mg(2+) as a cofactor.

Its subcellular location is the cytoplasm. It is found in the cytoskeleton. Tubulin is the major constituent of microtubules, a cylinder consisting of laterally associated linear protofilaments composed of alpha- and beta-tubulin heterodimers. Microtubules grow by the addition of GTP-tubulin dimers to the microtubule end, where a stabilizing cap forms. Below the cap, tubulin dimers are in GDP-bound state, owing to GTPase activity of alpha-tubulin. In Arabidopsis thaliana (Mouse-ear cress), this protein is Tubulin beta-7 chain (TUBB7).